The primary structure comprises 149 residues: Transcriptional repressor NrdR (149 aa).

A zinc finger spans residues 3-34 (CPFCSAVDTKVIDSRLVGEGSQVRRRRQCLVC). One can recognise an ATP-cone domain in the interval 49–139 (PRVIKSNEVR…VYRSFEDIRE (91 aa)).

This sequence belongs to the NrdR family. It depends on Zn(2+) as a cofactor.

Its function is as follows. Negatively regulates transcription of bacterial ribonucleotide reductase nrd genes and operons by binding to NrdR-boxes. This is Transcriptional repressor NrdR from Pectobacterium atrosepticum (strain SCRI 1043 / ATCC BAA-672) (Erwinia carotovora subsp. atroseptica).